The following is a 601-amino-acid chain: Molybdenum cofactor synthesis protein cinnamon (601 aa).

Residues 3 to 153 (SITFGVLTIS…TISALLPHAV (151 aa)) form an MPT adenylyltransferase region. The interval 173–195 (SAQKSHICPHKTGTGTDSDRNSP) is disordered. The MPT Mo-transferase stretch occupies residues 184-596 (TGTGTDSDRN…FPASVLRFDF (413 aa)). Ser-376 carries the post-translational modification Phosphoserine.

This sequence in the N-terminal section; belongs to the MoaB/Mog family. In the C-terminal section; belongs to the MoeA family. Mg(2+) serves as cofactor.

The catalysed reaction is molybdopterin + ATP + H(+) = adenylyl-molybdopterin + diphosphate. It carries out the reaction adenylyl-molybdopterin + molybdate = Mo-molybdopterin + AMP + H(+). The protein operates within cofactor biosynthesis; molybdopterin biosynthesis. Catalyzes two steps in the biosynthesis of the molybdenum cofactor. In the first step, molybdopterin is adenylated. Subsequently, molybdate is inserted into adenylated molybdopterin and AMP is released. The protein is Molybdenum cofactor synthesis protein cinnamon (cin) of Drosophila melanogaster (Fruit fly).